The chain runs to 151 residues: Protein Smg homolog (151 aa).

It belongs to the Smg family.

The polypeptide is Protein Smg homolog (Laribacter hongkongensis (strain HLHK9)).